The following is a 401-amino-acid chain: Probable tRNA sulfurtransferase (401 aa).

The 106-residue stretch at 60–165 folds into the THUMP domain; that stretch reads EPISEQLKGV…EQATYITFKD (106 aa). Residues 183–184, 208–209, arginine 265, glycine 287, and glutamine 296 contribute to the ATP site; these read ML and HF.

The protein belongs to the ThiI family.

The protein resides in the cytoplasm. The catalysed reaction is [ThiI sulfur-carrier protein]-S-sulfanyl-L-cysteine + a uridine in tRNA + 2 reduced [2Fe-2S]-[ferredoxin] + ATP + H(+) = [ThiI sulfur-carrier protein]-L-cysteine + a 4-thiouridine in tRNA + 2 oxidized [2Fe-2S]-[ferredoxin] + AMP + diphosphate. It catalyses the reaction [ThiS sulfur-carrier protein]-C-terminal Gly-Gly-AMP + S-sulfanyl-L-cysteinyl-[cysteine desulfurase] + AH2 = [ThiS sulfur-carrier protein]-C-terminal-Gly-aminoethanethioate + L-cysteinyl-[cysteine desulfurase] + A + AMP + 2 H(+). The protein operates within cofactor biosynthesis; thiamine diphosphate biosynthesis. Functionally, catalyzes the ATP-dependent transfer of a sulfur to tRNA to produce 4-thiouridine in position 8 of tRNAs, which functions as a near-UV photosensor. Also catalyzes the transfer of sulfur to the sulfur carrier protein ThiS, forming ThiS-thiocarboxylate. This is a step in the synthesis of thiazole, in the thiamine biosynthesis pathway. The sulfur is donated as persulfide by IscS. In Bacillus pumilus (strain SAFR-032), this protein is Probable tRNA sulfurtransferase.